The following is a 145-amino-acid chain: Arginine repressor (145 aa).

The protein belongs to the ArgR family.

The protein resides in the cytoplasm. It functions in the pathway amino-acid biosynthesis; L-arginine biosynthesis [regulation]. Its function is as follows. Regulates arginine biosynthesis genes. The protein is Arginine repressor of Streptococcus mutans serotype c (strain ATCC 700610 / UA159).